A 540-amino-acid chain; its full sequence is Chaperonin GroEL 1 (540 aa).

ATP is bound by residues 29 to 32 (TIGP), 86 to 90 (DGTTT), Gly-415, 479 to 481 (NAA), and Asp-495.

It belongs to the chaperonin (HSP60) family. In terms of assembly, forms a cylinder of 14 subunits composed of two heptameric rings stacked back-to-back. Interacts with the co-chaperonin GroES.

The protein resides in the cytoplasm. It catalyses the reaction ATP + H2O + a folded polypeptide = ADP + phosphate + an unfolded polypeptide.. Its function is as follows. Together with its co-chaperonin GroES, plays an essential role in assisting protein folding. The GroEL-GroES system forms a nano-cage that allows encapsulation of the non-native substrate proteins and provides a physical environment optimized to promote and accelerate protein folding. The protein is Chaperonin GroEL 1 of Streptomyces albus G.